Reading from the N-terminus, the 467-residue chain is Retinoic acid receptor RXR-alpha (467 aa).

Positions 1–61 (MDTKHFLPLD…LHSPISTLSS (61 aa)) are disordered. The modulating stretch occupies residues 1–139 (MDTKHFLPLD…GNMSSFTKHI (139 aa)). Residue K4 forms a Glycyl lysine isopeptide (Lys-Gly) (interchain with G-Cter in SUMO2) linkage. 2 positions are modified to phosphoserine: S22 and S28. Over residues 32-55 (PSLHPSLGPGLGSPLGSPGQLHSP) the composition is skewed to low complexity. Residues S61 and S75 each carry the phosphoserine; by MAPK8 and MAPK9 modification. The tract at residues 79-109 (PHSMSVPTTPTLGFETGSPQLNSPMNPVSSS) is disordered. Polar residues predominate over residues 83-109 (SVPTTPTLGFETGSPQLNSPMNPVSSS). T87 bears the Phosphothreonine; by MAPK8 and MAPK9 mark. K113 is covalently cross-linked (Glycyl lysine isopeptide (Lys-Gly) (interchain with G-Cter in SUMO)). S134 bears the Phosphoserine mark. Positions 140 and 143 each coordinate Zn(2+). The NR C4-type zinc finger occupies 140 to 160 (CAICGDRSSGKHYGVYSCEGC). A DNA-binding region (nuclear receptor) is located at residues 140–205 (CAICGDRSSG…RYQKCLAMGM (66 aa)). An N6-acetyllysine modification is found at K150. Positions 157 and 160 each coordinate Zn(2+). Positions 165–170 (KRTVRK) are nuclear localization signal. Residues C176, C182, C192, and C195 each contribute to the Zn(2+) site. The segment at 176-200 (CRDNKDCLIDKRQRNRCQYCRYQKC) adopts an NR C4-type zinc-finger fold. Positions 206–229 (KREAVQEERQRGKDRNENEVESTS) are hinge. The segment covering 211–223 (QEERQRGKDRNEN) has biased composition (basic and acidic residues). Positions 211-233 (QEERQRGKDRNENEVESTSSANE) are disordered. One can recognise an NR LBD domain in the interval 232 to 463 (NEDMPVEKIL…TFLMEMLEAP (232 aa)). S264 is subject to Phosphoserine. Residue S265 is modified to Phosphoserine; by MAPK8 and MAPK9. 9-cis-retinoate contacts are provided by R321 and A332. All-trans-retinoate contacts are provided by R321 and A332. The interval 353 to 373 (RVLTELVSKMRDMQMDKTELG) is required for nuclear export.

It belongs to the nuclear hormone receptor family. NR2 subfamily. In terms of assembly, homodimer. Heterodimer (via C-terminus) with RARA; required for ligand-dependent retinoic acid receptor transcriptional activity; association with RARA is enhanced by pulsatile shear stress. Heterodimer with PPARA (via the leucine-like zipper in the LBD); the interaction is required for PPARA transcriptional activity. Heterodimerizes with PPARG. Heterodimerizes (via NR LBD) with RARB. Heterodimerizes with NR1H4; the heterodimerization enhances the binding affinity for LXXLL motifs from coactivators. Interacts with NCOA3 and NCOA6 coactivators. Interacts with FAM120B. Interacts with coactivator PELP1, SENP6, SFPQ, DNTTIP2 and RNF8. Interacts with PRMT2. Interacts with ASXL1. Interacts with BHLHE40/DEC1, BHLHE41/DEC2, MED1, NCOR1 and NCOR2. Interacts in a ligand-dependent fashion with MED1 and NCOA1. Interacts with VDR. Interacts with EP300; the interaction is decreased by 9-cis retinoic acid. Heterodimer (via C-terminus) with NR4A1 (DNA-binding domain); the interaction is enhanced by 9-cis retinoic acid. NR4A1 competes with EP300 for interaction with RXRA and thereby attenuates EP300 mediated acetylation of RXRA. In the absence of hormonal ligand, interacts with TACC1. Interacts ith IGFBP3. Post-translationally, phosphorylated on serine and threonine residues mainly in the N-terminal modulating domain. Constitutively phosphorylated on Ser-22 in the presence or absence of ligand. Under stress conditions, hyperphosphorylated by activated JNK on Ser-61, Ser-75, Thr-87 and Ser-265. Phosphorylated on Ser-28, in vitro, by PKA. This phosphorylation is required for repression of cAMP-mediated transcriptional activity of RARA. Ubiquitinated by UBR5, leading to its degradation: UBR5 specifically recognizes and binds ligand-bound RXRA when it is not associated with coactivators (NCOAs). In presence of NCOAs, the UBR5-degron is not accessible, preventing its ubiquitination and degradation. In terms of processing, sumoylation negatively regulates transcriptional activity. Desumoylated specifically by SENP6. Post-translationally, acetylated by EP300; acetylation enhances DNA binding and transcriptional activity. In terms of tissue distribution, expressed in the adrenal gland with main expression in the zona fasciculata and medulla (at protein level). Expressed in aortic endothelial cells, with high expression in the descending thoracic aorta and the outer curvature of the aortic arch, where pulsatory shear stress exists, but very low in the inner curvature of the aortic arch, where oscillatory shear stress prevails (at protein level).

It is found in the nucleus. The protein localises to the cytoplasm. It localises to the mitochondrion. In terms of biological role, receptor for retinoic acid that acts as a transcription factor. Forms homo- or heterodimers with retinoic acid receptors (RARs) and binds to target response elements in response to their ligands, all-trans or 9-cis retinoic acid, to regulate gene expression in various biological processes. The RAR/RXR heterodimers bind to the retinoic acid response elements (RARE) composed of tandem 5'-AGGTCA-3' sites known as DR1-DR5 to regulate transcription. The high affinity ligand for retinoid X receptors (RXRs) is 9-cis retinoic acid. In the absence of ligand, the RXR-RAR heterodimers associate with a multiprotein complex containing transcription corepressors that induce histone deacetylation, chromatin condensation and transcriptional suppression. On ligand binding, the corepressors dissociate from the receptors and coactivators are recruited leading to transcriptional activation. Serves as a common heterodimeric partner for a number of nuclear receptors, such as RARA, RARB and PPARA. The RXRA/RARB heterodimer can act as a transcriptional repressor or transcriptional activator, depending on the RARE DNA element context. The RXRA/PPARA heterodimer is required for PPARA transcriptional activity on fatty acid oxidation genes such as ACOX1 and the P450 system genes. Together with RARA, positively regulates microRNA-10a expression, thereby inhibiting the GATA6/VCAM1 signaling response to pulsatile shear stress in vascular endothelial cells. Acts as an enhancer of RARA binding to RARE DNA element. May facilitate the nuclear import of heterodimerization partners such as VDR and NR4A1. Promotes myelin debris phagocytosis and remyelination by macrophages. Plays a role in the attenuation of the innate immune system in response to viral infections, possibly by negatively regulating the transcription of antiviral genes such as type I IFN genes. Involved in the regulation of calcium signaling by repressing ITPR2 gene expression, thereby controlling cellular senescence. The sequence is that of Retinoic acid receptor RXR-alpha (Rxra) from Rattus norvegicus (Rat).